The chain runs to 144 residues: Protein archease (144 aa).

Residues Asp14, Asp143, and Ile144 each contribute to the Ca(2+) site.

This sequence belongs to the archease family.

Activates the tRNA-splicing ligase complex by facilitating the enzymatic turnover of catalytic subunit RtcB. Acts by promoting the guanylylation of RtcB, a key intermediate step in tRNA ligation. Can also alter the NTP specificity of RtcB such that ATP, dGTP or ITP is used efficiently. This is Protein archease from Aeropyrum pernix (strain ATCC 700893 / DSM 11879 / JCM 9820 / NBRC 100138 / K1).